Reading from the N-terminus, the 156-residue chain is Small ribosomal subunit protein uS7 (156 aa).

It belongs to the universal ribosomal protein uS7 family. As to quaternary structure, part of the 30S ribosomal subunit. Contacts proteins S9 and S11.

Its function is as follows. One of the primary rRNA binding proteins, it binds directly to 16S rRNA where it nucleates assembly of the head domain of the 30S subunit. Is located at the subunit interface close to the decoding center, probably blocks exit of the E-site tRNA. The polypeptide is Small ribosomal subunit protein uS7 (rspG) (Streptomyces coelicolor (strain ATCC BAA-471 / A3(2) / M145)).